We begin with the raw amino-acid sequence, 120 residues long: Chaperonin GroEL (120 aa).

23-27 (DGTTT) contributes to the ATP binding site.

It belongs to the chaperonin (HSP60) family. As to quaternary structure, forms a cylinder of 14 subunits composed of two heptameric rings stacked back-to-back. Interacts with the co-chaperonin GroES.

The protein localises to the cytoplasm. The enzyme catalyses ATP + H2O + a folded polypeptide = ADP + phosphate + an unfolded polypeptide.. Together with its co-chaperonin GroES, plays an essential role in assisting protein folding. The GroEL-GroES system forms a nano-cage that allows encapsulation of the non-native substrate proteins and provides a physical environment optimized to promote and accelerate protein folding. This chain is Chaperonin GroEL, found in Mycolicibacterium chitae (Mycobacterium chitae).